We begin with the raw amino-acid sequence, 436 residues long: Serine--tRNA ligase (436 aa).

Positions 43–55 (TKSEQLKQKRNEV) are enriched in basic and acidic residues. The tract at residues 43-69 (TKSEQLKQKRNEVSDQIAQAKRNKEDA) is disordered. 237 to 239 (TAE) provides a ligand contact to L-serine. 268 to 270 (RSE) contacts ATP. Residue glutamate 291 coordinates L-serine. 355–358 (EISS) lines the ATP pocket. Serine 390 is an L-serine binding site.

Belongs to the class-II aminoacyl-tRNA synthetase family. Type-1 seryl-tRNA synthetase subfamily. In terms of assembly, homodimer. The tRNA molecule binds across the dimer.

It localises to the cytoplasm. The catalysed reaction is tRNA(Ser) + L-serine + ATP = L-seryl-tRNA(Ser) + AMP + diphosphate + H(+). It catalyses the reaction tRNA(Sec) + L-serine + ATP = L-seryl-tRNA(Sec) + AMP + diphosphate + H(+). Its pathway is aminoacyl-tRNA biosynthesis; selenocysteinyl-tRNA(Sec) biosynthesis; L-seryl-tRNA(Sec) from L-serine and tRNA(Sec): step 1/1. Its function is as follows. Catalyzes the attachment of serine to tRNA(Ser). Is also able to aminoacylate tRNA(Sec) with serine, to form the misacylated tRNA L-seryl-tRNA(Sec), which will be further converted into selenocysteinyl-tRNA(Sec). The sequence is that of Serine--tRNA ligase from Lactobacillus gasseri (strain ATCC 33323 / DSM 20243 / BCRC 14619 / CIP 102991 / JCM 1131 / KCTC 3163 / NCIMB 11718 / NCTC 13722 / AM63).